A 147-amino-acid chain; its full sequence is Acidic phospholipase A2 1 (147 aa).

The signal sequence occupies residues 1-19 (MNPAHLLVLAAVCVSLLGA). The propeptide occupies 20–27 (AIVPPQPL). Cystine bridges form between Cys-38–Cys-99, Cys-54–Cys-146, Cys-56–Cys-72, Cys-71–Cys-127, Cys-78–Cys-120, Cys-88–Cys-113, and Cys-106–Cys-118. Ca(2+) is bound by residues Tyr-55, Gly-57, and Gly-59. The active site involves His-75. Asp-76 serves as a coordination point for Ca(2+). Asp-121 is a catalytic residue.

It belongs to the phospholipase A2 family. Group I subfamily. D49 sub-subfamily. Ca(2+) serves as cofactor. In terms of tissue distribution, expressed by the venom gland.

The protein resides in the secreted. It catalyses the reaction a 1,2-diacyl-sn-glycero-3-phosphocholine + H2O = a 1-acyl-sn-glycero-3-phosphocholine + a fatty acid + H(+). PLA2 catalyzes the calcium-dependent hydrolysis of the 2-acyl groups in 3-sn-phosphoglycerides. In Bungarus flaviceps flaviceps (Red-headed krait), this protein is Acidic phospholipase A2 1.